Reading from the N-terminus, the 709-residue chain is Ribosomal RNA large subunit methyltransferase K/L (709 aa).

Residues 43–154 (LAYRITLWTR…NGVITIAMNF (112 aa)) form the THUMP domain.

The protein belongs to the methyltransferase superfamily. RlmKL family.

It localises to the cytoplasm. It catalyses the reaction guanosine(2445) in 23S rRNA + S-adenosyl-L-methionine = N(2)-methylguanosine(2445) in 23S rRNA + S-adenosyl-L-homocysteine + H(+). It carries out the reaction guanosine(2069) in 23S rRNA + S-adenosyl-L-methionine = N(2)-methylguanosine(2069) in 23S rRNA + S-adenosyl-L-homocysteine + H(+). Specifically methylates the guanine in position 2445 (m2G2445) and the guanine in position 2069 (m7G2069) of 23S rRNA. The polypeptide is Ribosomal RNA large subunit methyltransferase K/L (Shewanella sp. (strain W3-18-1)).